A 307-amino-acid chain; its full sequence is Pyridoxal 5'-phosphate synthase subunit PdxS (307 aa).

Residues Met-1–Arg-10 show a composition bias toward basic residues. The tract at residues Met-1 to Pro-20 is disordered. Asp-37 is a binding site for D-ribose 5-phosphate. The Schiff-base intermediate with D-ribose 5-phosphate role is filled by Lys-94. Gly-166 is a D-ribose 5-phosphate binding site. D-glyceraldehyde 3-phosphate is bound at residue Arg-178. D-ribose 5-phosphate-binding positions include Gly-227 and Gly-248–Ser-249.

It belongs to the PdxS/SNZ family. In the presence of PdxT, forms a dodecamer of heterodimers.

It catalyses the reaction aldehydo-D-ribose 5-phosphate + D-glyceraldehyde 3-phosphate + L-glutamine = pyridoxal 5'-phosphate + L-glutamate + phosphate + 3 H2O + H(+). It functions in the pathway cofactor biosynthesis; pyridoxal 5'-phosphate biosynthesis. In terms of biological role, catalyzes the formation of pyridoxal 5'-phosphate from ribose 5-phosphate (RBP), glyceraldehyde 3-phosphate (G3P) and ammonia. The ammonia is provided by the PdxT subunit. Can also use ribulose 5-phosphate and dihydroxyacetone phosphate as substrates, resulting from enzyme-catalyzed isomerization of RBP and G3P, respectively. The chain is Pyridoxal 5'-phosphate synthase subunit PdxS from Deinococcus radiodurans (strain ATCC 13939 / DSM 20539 / JCM 16871 / CCUG 27074 / LMG 4051 / NBRC 15346 / NCIMB 9279 / VKM B-1422 / R1).